The following is a 341-amino-acid chain: Methionine import ATP-binding protein MetN (341 aa).

Residues 2-241 form the ABC transporter domain; sequence IELNQVVKRY…PQHEVTRRFV (240 aa). 38–45 contacts ATP; that stretch reads GFSGAGKS.

Belongs to the ABC transporter superfamily. Methionine importer (TC 3.A.1.24) family. As to quaternary structure, the complex is composed of two ATP-binding proteins (MetN), two transmembrane proteins (MetI) and a solute-binding protein (MetQ).

The protein localises to the cell membrane. The catalysed reaction is L-methionine(out) + ATP + H2O = L-methionine(in) + ADP + phosphate + H(+). It carries out the reaction D-methionine(out) + ATP + H2O = D-methionine(in) + ADP + phosphate + H(+). Functionally, part of the ABC transporter complex MetNIQ involved in methionine import. Responsible for energy coupling to the transport system. This is Methionine import ATP-binding protein MetN from Staphylococcus haemolyticus (strain JCSC1435).